The sequence spans 492 residues: Ferruginol synthase (492 aa).

Residues 1-21 (METIALLAALFFIALTCFLTS) form a helical membrane-spanning segment. At 22 to 492 (GRRRNLPPGP…VPLKIIPLRP (471 aa)) the chain is on the cytoplasmic side. Heme is bound at residue Cys-436.

Belongs to the cytochrome P450 family. It depends on heme as a cofactor.

The protein resides in the endoplasmic reticulum membrane. The catalysed reaction is abieta-8,11,13-triene + reduced [NADPH--hemoprotein reductase] + O2 = ferruginol + oxidized [NADPH--hemoprotein reductase] + H2O + H(+). The protein operates within secondary metabolite biosynthesis; terpenoid biosynthesis. Its function is as follows. Cytochrome P450 enzyme (CYP) which catalyzes a unique two-electron oxidation cascade on abieta-8,11,13-triene to produce ferruginol, an intermediate in tanshinone biosynthesis. This is Ferruginol synthase from Isodon rubescens (Rabdosia rubescens).